We begin with the raw amino-acid sequence, 89 residues long: Small ribosomal subunit protein uS15 (89 aa).

This sequence belongs to the universal ribosomal protein uS15 family. In terms of assembly, part of the 30S ribosomal subunit. Forms a bridge to the 50S subunit in the 70S ribosome, contacting the 23S rRNA.

In terms of biological role, one of the primary rRNA binding proteins, it binds directly to 16S rRNA where it helps nucleate assembly of the platform of the 30S subunit by binding and bridging several RNA helices of the 16S rRNA. Its function is as follows. Forms an intersubunit bridge (bridge B4) with the 23S rRNA of the 50S subunit in the ribosome. In Prochlorococcus marinus (strain MIT 9312), this protein is Small ribosomal subunit protein uS15.